A 490-amino-acid chain; its full sequence is Cobyric acid synthase (490 aa).

One can recognise a GATase cobBQ-type domain in the interval 252–439 (RLKVVVPVLP…LHGLFESTAA (188 aa)). The active-site Nucleophile is C333. The active site involves H431.

The protein belongs to the CobB/CobQ family. CobQ subfamily.

It functions in the pathway cofactor biosynthesis; adenosylcobalamin biosynthesis. Functionally, catalyzes amidations at positions B, D, E, and G on adenosylcobyrinic A,C-diamide. NH(2) groups are provided by glutamine, and one molecule of ATP is hydrogenolyzed for each amidation. This Pseudomonas aeruginosa (strain ATCC 15692 / DSM 22644 / CIP 104116 / JCM 14847 / LMG 12228 / 1C / PRS 101 / PAO1) protein is Cobyric acid synthase.